A 224-amino-acid chain; its full sequence is Holliday junction branch migration complex subunit RuvA (224 aa).

Positions 1 to 67 (MISWLKGEKV…EDGTSLYGFI (67 aa)) are domain I. Residues 68 to 146 (EVNQRDLFRE…RFTDNDKTIH (79 aa)) form a domain II region. The segment at 147 to 155 (ENKKGIEAN) is flexible linker. A domain III region spans residues 156–224 (QFSKYIDEIY…ILMKLSEKTT (69 aa)).

This sequence belongs to the RuvA family. As to quaternary structure, homotetramer. Forms an RuvA(8)-RuvB(12)-Holliday junction (HJ) complex. HJ DNA is sandwiched between 2 RuvA tetramers; dsDNA enters through RuvA and exits via RuvB. An RuvB hexamer assembles on each DNA strand where it exits the tetramer. Each RuvB hexamer is contacted by two RuvA subunits (via domain III) on 2 adjacent RuvB subunits; this complex drives branch migration. In the full resolvosome a probable DNA-RuvA(4)-RuvB(12)-RuvC(2) complex forms which resolves the HJ.

It is found in the cytoplasm. In terms of biological role, the RuvA-RuvB-RuvC complex processes Holliday junction (HJ) DNA during genetic recombination and DNA repair, while the RuvA-RuvB complex plays an important role in the rescue of blocked DNA replication forks via replication fork reversal (RFR). RuvA specifically binds to HJ cruciform DNA, conferring on it an open structure. The RuvB hexamer acts as an ATP-dependent pump, pulling dsDNA into and through the RuvAB complex. HJ branch migration allows RuvC to scan DNA until it finds its consensus sequence, where it cleaves and resolves the cruciform DNA. This chain is Holliday junction branch migration complex subunit RuvA, found in Prochlorococcus marinus (strain NATL1A).